The following is a 292-amino-acid chain: MPSPRRTIEGRPLGSSGGSSVPGSPAHGGGSGGGRFEFQSLLNCRAGADPACARLRASDSPVHRRGSFPLAASGPAQAAPAPPPEDARMNLNPSFLGIALRSLLAIDLWLSKKLGVCAGESSAWGSVRPLMKLLEISGHGIPWLLGTLYCLLRSDSWAGREVLMNLLFALLLDLLLVAVIKGLVRRRRPAHNQKDMFFTLSVDRYSFPSGHATRAALVSRFILNHLVLAIPLRVLVVLWAFVLGLSRVMLGRHNVTDVAFGFFLGYMQYSIVDYCWLSPHNVPVLFVLWNQQ.

Disordered regions lie at residues Met1–Gly34 and Gly66–Asp86. The Cytoplasmic segment spans residues Met1–Met131. Residues Gly10–Pro25 show a composition bias toward low complexity. A phosphoserine mark is found at Ser24 and Ser67. Low complexity predominate over residues Pro69 to Ala79. Residues Lys132–Leu152 form a helical membrane-spanning segment. Over Arg153–Glu161 the chain is Lumenal. A helical membrane pass occupies residues Val162–Gly182. The tract at residues Lys181 to Pro189 is phosphatase sequence motif I. The Cytoplasmic portion of the chain corresponds to Leu183–His225. Positions Pro208 to His211 are phosphatase sequence motif II. The Proton donors role is filled by His211. Residues Leu226–Ser246 traverse the membrane as a helical segment. Positions Ser246–Asp257 are phosphatase sequence motif III. Topologically, residues Arg247 to Asp257 are lumenal. Catalysis depends on His253, which acts as the Nucleophile. Residues Val258 to Ser278 traverse the membrane as a helical segment. Residues Pro279–Gln292 lie on the Cytoplasmic side of the membrane.

Belongs to the PA-phosphatase related phosphoesterase family. Post-translationally, phosphorylation by PKC activates the phosphatase activity towards presqualene diphosphate.

It localises to the endoplasmic reticulum membrane. It is found in the nucleus envelope. Its subcellular location is the nucleus inner membrane. The enzyme catalyses presqualene diphosphate + H2O = presqualene phosphate + phosphate + H(+). The catalysed reaction is presqualene phosphate + H2O = presqualene alcohol + phosphate. It catalyses the reaction (2E,6E)-farnesyl diphosphate + H2O = (2E,6E)-farnesyl phosphate + phosphate + H(+). It carries out the reaction (2E,6E)-farnesyl phosphate + H2O = (2E,6E)-farnesol + phosphate. The enzyme catalyses (2E,6E,10E)-geranylgeranyl diphosphate + H2O = (2E,6E,10E)-geranylgeranyl phosphate + phosphate + H(+). The catalysed reaction is (2E,6E,10E)-geranylgeranyl phosphate + H2O = (2E,6E,10E)-geranylgeraniol + phosphate. It catalyses the reaction (2E)-geranyl diphosphate + H2O = (2E)-geranyl phosphate + phosphate + H(+). It carries out the reaction (2E)-geranyl phosphate + H2O = (2E)-geraniol + phosphate. The enzyme catalyses 1,2-dihexadecanoyl-sn-glycero-3-phosphate + H2O = 1,2-dihexadecanoyl-sn-glycerol + phosphate. Magnesium-independent polyisoprenoid diphosphatase that catalyzes the sequential dephosphorylation of presqualene, farnesyl, geranyl and geranylgeranyl diphosphates. Functions in the innate immune response through the dephosphorylation of presqualene diphosphate which acts as a potent inhibitor of the signaling pathways contributing to polymorphonuclear neutrophils activation. May regulate the biosynthesis of cholesterol and related sterols by dephosphorylating presqualene and farnesyl diphosphate, two key intermediates in this biosynthetic pathway. May also play a role in protein prenylation by acting on farnesyl diphosphate and its derivative geranylgeranyl diphosphate, two precursors for the addition of isoprenoid anchors to membrane proteins. Has a lower activity towards phosphatidic acid (PA), but through phosphatidic acid dephosphorylation may participate in the biosynthesis of phospholipids and triacylglycerols. May also act on ceramide-1-P, lysophosphatidic acid (LPA) and sphing-4-enine 1-phosphate/sphingosine-1-phosphate. This is Polyisoprenoid diphosphate/phosphate phosphohydrolase PLPP6 from Mus musculus (Mouse).